The chain runs to 518 residues: Glutamate--cysteine ligase (518 aa).

It belongs to the glutamate--cysteine ligase type 1 family. Type 1 subfamily.

The catalysed reaction is L-cysteine + L-glutamate + ATP = gamma-L-glutamyl-L-cysteine + ADP + phosphate + H(+). The protein operates within sulfur metabolism; glutathione biosynthesis; glutathione from L-cysteine and L-glutamate: step 1/2. This Shigella boydii serotype 18 (strain CDC 3083-94 / BS512) protein is Glutamate--cysteine ligase.